The chain runs to 1019 residues: Enteropeptidase (1019 aa).

Glycine 2 carries the N-myristoyl glycine lipid modification. Over 2–18 the chain is Cytoplasmic; sequence GSKRGISSRHHSLSSYE. A helical; Signal-anchor for type II membrane protein transmembrane segment spans residues 19 to 47; it reads IMFAALFAILVVLCAGLIAVSCLTIKESQ. The Extracellular segment spans residues 48-1019; it reads RGAALGQSHE…FTEWIQSFLH (972 aa). One can recognise an SEA domain in the interval 54-169; it reads QSHEARATFK…NSVDILDKLT (116 aa). N-linked (GlcNAc...) asparagine glycosylation is found at asparagine 116, asparagine 147, and asparagine 179. In terms of domain architecture, LDL-receptor class A 1 spans 182-223; it reads IECLPGSSPCTDALTCIKADLFCDGEVNCPDGSDEDNKMCAT. 4 disulfides stabilise this stretch: cysteine 184-cysteine 197, cysteine 191-cysteine 210, cysteine 204-cysteine 221, and cysteine 225-cysteine 253. A CUB 1 domain is found at 225–334; the sequence is CDGRFLLTGS…VGFNATYTAF (110 aa). 8 N-linked (GlcNAc...) asparagine glycosylation sites follow: asparagine 328, asparagine 335, asparagine 388, asparagine 440, asparagine 470, asparagine 503, asparagine 534, and asparagine 630. The region spanning 342–504 is the MAM domain; that stretch reads YEKINCNFED…ISLTYGICNG (163 aa). Cysteine 524 and cysteine 552 are oxidised to a cystine. One can recognise a CUB 2 domain in the interval 524–634; that stretch reads CGGPFELWEP…GGFKANFTTG (111 aa). The LDL-receptor class A 2 domain occupies 641-679; that stretch reads EPCKADHFQCKNGECVPLVNLCDGHLHCEDGSDEADCVR. 3 cysteine pairs are disulfide-bonded: cysteine 643/cysteine 655, cysteine 650/cysteine 668, and cysteine 662/cysteine 677. One can recognise an SRCR domain in the interval 678–771; the sequence is VRFFNGTTNN…LIRLQCNHKS (94 aa). N-linked (GlcNAc...) asparagine glycans are attached at residues asparagine 682, asparagine 706, and asparagine 725. Disulfide bonds link cysteine 757/cysteine 767, cysteine 772/cysteine 896, and cysteine 810/cysteine 826. Residues 785–1019 form the Peptidase S1 domain; that stretch reads IVGGSNAKEG…FTEWIQSFLH (235 aa). Histidine 825 functions as the Charge relay system in the catalytic mechanism. Residue asparagine 848 is glycosylated (N-linked (GlcNAc...) asparagine). Aspartate 876 functions as the Charge relay system in the catalytic mechanism. Residues asparagine 887, asparagine 909, and asparagine 949 are each glycosylated (N-linked (GlcNAc...) asparagine). Cystine bridges form between cysteine 910/cysteine 977, cysteine 941/cysteine 956, and cysteine 967/cysteine 995. Serine 971 acts as the Charge relay system in catalysis.

Belongs to the peptidase S1 family. In terms of assembly, heterodimer of a catalytic (light) chain and a multidomain (heavy) chain linked by a disulfide bond. Post-translationally, the chains are derived from a single precursor that is cleaved by a trypsin-like protease. In terms of tissue distribution, intestinal brush border.

The protein localises to the membrane. It catalyses the reaction Activation of trypsinogen by selective cleavage of 6-Lys-|-Ile-7 bond.. Its function is as follows. Responsible for initiating activation of pancreatic proteolytic proenzymes (trypsin, chymotrypsin and carboxypeptidase A). It catalyzes the conversion of trypsinogen to trypsin which in turn activates other proenzymes including chymotrypsinogen, procarboxypeptidases, and proelastases. In Homo sapiens (Human), this protein is Enteropeptidase (TMPRSS15).